Reading from the N-terminus, the 495-residue chain is UDP-glycosyltransferase 73C5 (495 aa).

The helical transmembrane segment at 146–162 (ILFHGMGCFCLLCMHVL) threads the bilayer. UDP-alpha-D-glucose is bound by residues S296, 356–358 (SPQ), 373–381 (HCGWNSTLE), and 395–398 (FADQ). A disordered region spans residues 446 to 477 (MGESDDAKERRRRAKELGDSAHKAVEEGGSSH). Basic and acidic residues predominate over residues 450 to 471 (DDAKERRRRAKELGDSAHKAVE).

It belongs to the UDP-glycosyltransferase family. Elongating hypocotyls and root-specific. Expressed in the vascular system, in meristematic tissues of the root tip, and in the vasculature of the hypocotyl right after germination. In late stage of flower development, expressed in petals, and in abscission zones.

Its subcellular location is the membrane. Functionally, specifically catalyzes 23-O-glucosylation of brassinosteroids, resulting probably in their inactivation. Also, involved in the O-glucosylation of trans-zeatin and dihydrozeatin. Active in vitro on cis-zeatin, dihydrozeatin-9-N-Glc, and olomoucine. Also involved in the detoxification of the Fusarium mycotoxin deoxynivalenol by the transfer of glucose from UDP-glucose to the hydroxyl group at C-3. Possesses low quercetin 7-O-glucosyltransferase and 4'-O-glucosyltransferase activities in vitro. The chain is UDP-glycosyltransferase 73C5 (UGT73C5) from Arabidopsis thaliana (Mouse-ear cress).